The primary structure comprises 247 residues: MGYLTSSFVLFFLLCVTYTYAATIEVRNNCPYTVWAASTPIGGGRRLNRGQTWVINAPRGTKMARIWGRTGCNFNAAGRGTCQTGDCGGVLQCTGWGKPPNTLAEYALDQFSNLDFWDISLVDGFNIPMTFAPTKPSGGKCHAIHCTANINGECPRALKVPGGCNNPCTTFGGQQYCCTQGPCGPTELSKFFKKRCPDAYSYPQDDPTSTFTCPGGSTNYRVVFCPNGVADPNFPLEMPASTDEVAK.

An N-terminal signal peptide occupies residues 1–21 (MGYLTSSFVLFFLLCVTYTYA). Intrachain disulfides connect Cys30–Cys225, Cys72–Cys82, Cys87–Cys93, Cys141–Cys213, Cys146–Cys196, Cys154–Cys164, Cys168–Cys177, and Cys178–Cys183.

The protein belongs to the thaumatin family. Highest levels of both isoforms found in the outer pericarp, with smaller amounts in the inner pericarp.

Its subcellular location is the cytoplasm. It is found in the vacuole. It catalyses the reaction Endohydrolysis of (1-&gt;3)- or (1-&gt;4)-linkages in beta-D-glucans when the glucose residue whose reducing group is involved in the linkage to be hydrolyzed is itself substituted at C-3.. Has antifungal activity against P.betae and F.dahliae. May be involved in disease resistance in tomatoes and/or have a possible role in fruit development and ripening. Binds to beta-glucans and exhibits beta-1,3-D-glucanase activity. The sequence is that of Osmotin-like protein NP24-I from Solanum lycopersicum (Tomato).